A 29-amino-acid chain; its full sequence is Snake venom metalloproteinase bothrolysin (29 aa).

One can recognise a Peptidase M12B domain in the interval 6–29; it reads RYIELFLVVDSGMFMKYNGNSDKI. Glu-9 lines the Ca(2+) pocket.

It belongs to the venom metalloproteinase (M12B) family. Zn(2+) is required as a cofactor. Expressed by the venom gland.

It is found in the secreted. The catalysed reaction is Cleavage of 4-Gln-|-His-5, 9-Ser-|-His-10 and 14-Ala-|-Leu-15 of insulin B chain and Pro-|-Phe of angiotensin I.. Its function is as follows. Snake venom zinc metalloproteinase that impairs hemostasis in the envenomed animal. The sequence is that of Snake venom metalloproteinase bothrolysin from Bothrops jararaca (Jararaca).